The chain runs to 535 residues: Formate--tetrahydrofolate ligase (535 aa).

50–57 contributes to the ATP binding site; it reads TPAGEGKT.

The protein belongs to the formate--tetrahydrofolate ligase family.

It catalyses the reaction (6S)-5,6,7,8-tetrahydrofolate + formate + ATP = (6R)-10-formyltetrahydrofolate + ADP + phosphate. The protein operates within one-carbon metabolism; tetrahydrofolate interconversion. This chain is Formate--tetrahydrofolate ligase, found in Picrophilus torridus (strain ATCC 700027 / DSM 9790 / JCM 10055 / NBRC 100828 / KAW 2/3).